We begin with the raw amino-acid sequence, 677 residues long: Methionine--tRNA ligase (677 aa).

A 'HIGH' region motif is present at residues 15–25 (PYANGSIHLGH). Positions 146, 149, 159, and 162 each coordinate Zn(2+). The 'KMSKS' region signature appears at 333-337 (KMSKS). Lysine 336 serves as a coordination point for ATP. Residues 575-677 (DFAKVDLRVA…EGAKPGQQVK (103 aa)) enclose the tRNA-binding domain.

It belongs to the class-I aminoacyl-tRNA synthetase family. MetG type 1 subfamily. As to quaternary structure, homodimer. It depends on Zn(2+) as a cofactor.

It is found in the cytoplasm. It carries out the reaction tRNA(Met) + L-methionine + ATP = L-methionyl-tRNA(Met) + AMP + diphosphate. Functionally, is required not only for elongation of protein synthesis but also for the initiation of all mRNA translation through initiator tRNA(fMet) aminoacylation. This chain is Methionine--tRNA ligase, found in Enterobacter sp. (strain 638).